Consider the following 285-residue polypeptide: Acetyl-coenzyme A carboxylase carboxyl transferase subunit beta (285 aa).

Positions 29 to 285 constitute a CoA carboxyltransferase N-terminal domain; the sequence is IMTKCPKCKK…ILKIHQEVTK (257 aa). Zn(2+) is bound by residues C33, C36, C52, and C55. A C4-type zinc finger spans residues 33–55; the sequence is CPKCKKIMYTKELAENLNVCFNC.

This sequence belongs to the AccD/PCCB family. Acetyl-CoA carboxylase is a heterohexamer composed of biotin carboxyl carrier protein (AccB), biotin carboxylase (AccC) and two subunits each of ACCase subunit alpha (AccA) and ACCase subunit beta (AccD). It depends on Zn(2+) as a cofactor.

The protein localises to the cytoplasm. The enzyme catalyses N(6)-carboxybiotinyl-L-lysyl-[protein] + acetyl-CoA = N(6)-biotinyl-L-lysyl-[protein] + malonyl-CoA. It functions in the pathway lipid metabolism; malonyl-CoA biosynthesis; malonyl-CoA from acetyl-CoA: step 1/1. In terms of biological role, component of the acetyl coenzyme A carboxylase (ACC) complex. Biotin carboxylase (BC) catalyzes the carboxylation of biotin on its carrier protein (BCCP) and then the CO(2) group is transferred by the transcarboxylase to acetyl-CoA to form malonyl-CoA. In Staphylococcus aureus (strain MSSA476), this protein is Acetyl-coenzyme A carboxylase carboxyl transferase subunit beta.